The following is a 462-amino-acid chain: tRNA modification GTPase MnmE (462 aa).

R27, E89, and R128 together coordinate (6S)-5-formyl-5,6,7,8-tetrahydrofolate. The TrmE-type G domain occupies 223-383; sequence GLKIAIVGRP…LEAAILAAVG (161 aa). Residue N233 coordinates K(+). Residues 233–238, 252–258, and 277–280 contribute to the GTP site; these read NVGKSS, TDLPGTT, and DTAG. Residue S237 coordinates Mg(2+). K(+)-binding residues include T252, L254, and T257. T258 contacts Mg(2+). A (6S)-5-formyl-5,6,7,8-tetrahydrofolate-binding site is contributed by K462.

The protein belongs to the TRAFAC class TrmE-Era-EngA-EngB-Septin-like GTPase superfamily. TrmE GTPase family. As to quaternary structure, homodimer. Heterotetramer of two MnmE and two MnmG subunits. Requires K(+) as cofactor.

It localises to the cytoplasm. Exhibits a very high intrinsic GTPase hydrolysis rate. Involved in the addition of a carboxymethylaminomethyl (cmnm) group at the wobble position (U34) of certain tRNAs, forming tRNA-cmnm(5)s(2)U34. The sequence is that of tRNA modification GTPase MnmE from Synechococcus elongatus (strain ATCC 33912 / PCC 7942 / FACHB-805) (Anacystis nidulans R2).